A 268-amino-acid polypeptide reads, in one-letter code: Protein MSS18 (268 aa).

To baculovirus occlusion-derived virus envelope protein E27 (ODV-E27).

It localises to the mitochondrion. Involved in splicing of intron aI5-beta of the mitochondrial COX1 transcript. This chain is Protein MSS18 (MSS18), found in Saccharomyces cerevisiae (strain ATCC 204508 / S288c) (Baker's yeast).